The chain runs to 110 residues: Small ribosomal subunit protein bS16 (110 aa).

The segment at 87–110 is disordered; it reads ARNNPEKAVPRKERKAAAEAAAKK.

This sequence belongs to the bacterial ribosomal protein bS16 family.

The chain is Small ribosomal subunit protein bS16 from Rhodopseudomonas palustris (strain HaA2).